The sequence spans 425 residues: Beta-1,4-galactosyltransferase galt-1 (425 aa).

Over 1-8 (MPRITASK) the chain is Cytoplasmic. The chain crosses the membrane as a helical; Signal-anchor for type II membrane protein span at residues 9-29 (IVLLIALSFCITVIYHFPIAT). Residues 30 to 425 (RSSKEYDEYG…FDSVVGLLDL (396 aa)) are Lumenal-facing. 2 N-linked (GlcNAc...) asparagine glycosylation sites follow: N109 and N152. The region spanning 189–394 (KMSICVPALF…LLRVYHYKDK (206 aa)) is the GT92 domain.

This sequence belongs to the glycosyltransferase 92 family. Mn(2+) serves as cofactor. Post-translationally, N-glycosylated. In terms of tissue distribution, expressed in intestine and coelomocytes.

The protein localises to the golgi apparatus. It localises to the golgi stack membrane. Inhibited by EDTA, Cu(2+) and Zn(2+). In terms of biological role, catalyzes the transfer of beta-galactose from UDP-galactose to position 4 of alpha-1,6-linked fucose at the reducing end GlcNAc in N-glycan cores. Involved in susceptibility to the nematotoxic C.cinerea galectin Cgl2, likely by contributing to the synthesis of core alpha-1,6-fucosylated N-glycans to which Cgl2 binds. This is Beta-1,4-galactosyltransferase galt-1 from Caenorhabditis elegans.